The chain runs to 588 residues: Lamin-B1 (588 aa).

A compositionally biased stretch (polar residues) spans 1–12 (MATATPVQQQRA). A disordered region spans residues 1–34 (MATATPVQQQRAGSRASAPATPLSPTRLSRLQEK). An N-acetylalanine modification is found at Ala2. Residues 2-35 (ATATPVQQQRAGSRASAPATPLSPTRLSRLQEKE) are head. Residues Thr3 and Thr5 each carry the phosphothreonine modification. Arg15 is modified (omega-N-methylarginine). Ser17 bears the Phosphoserine mark. Position 21 is a phosphothreonine (Thr21). The residue at position 24 (Ser24) is a Phosphoserine. Thr26 carries the post-translational modification Phosphothreonine. Ser29 is subject to Phosphoserine. The IF rod domain occupies 33 to 389 (EKEELRELND…KLLEGEEERL (357 aa)). Positions 36–70 (ELRELNDRLAVYIDKVRSLETENSALQLQVTEREE) are coil 1A. The tract at residues 71–82 (VRGRELTGLKAL) is linker 1. Residues 83 to 216 (YETELADARR…EFRKNMYEEE (134 aa)) are coil 1B. Residue Lys103 forms a Glycyl lysine isopeptide (Lys-Gly) (interchain with G-Cter in SUMO2) linkage. Lys112 carries the N6-acetyllysine modification. Lys124 is covalently cross-linked (Glycyl lysine isopeptide (Lys-Gly) (interchain with G-Cter in SUMO2)). Ser127 carries the post-translational modification Phosphoserine. A Glycyl lysine isopeptide (Lys-Gly) (interchain with G-Cter in SUMO2) cross-link involves residue Lys146. The residue at position 158 (Lys158) is an N6-acetyllysine; alternate. Lys158 is covalently cross-linked (Glycyl lysine isopeptide (Lys-Gly) (interchain with G-Cter in SUMO2); alternate). At Ser159 the chain carries Phosphoserine. Lys182 participates in a covalent cross-link: Glycyl lysine isopeptide (Lys-Gly) (interchain with G-Cter in SUMO2). Ser201 and Ser233 each carry phosphoserine. Residues 217 to 244 (INETRRKHETRLVEVDSGRQIEYEYKLA) form a linker 2 region. Residues Lys242 and Lys262 each participate in a glycyl lysine isopeptide (Lys-Gly) (interchain with G-Cter in SUMO2) cross-link. The interval 245–387 (QALHEMREQH…YRKLLEGEEE (143 aa)) is coil 2. N6-acetyllysine; alternate is present on Lys272. Residue Lys272 forms a Glycyl lysine isopeptide (Lys-Gly) (interchain with G-Cter in SUMO2); alternate linkage. Phosphoserine is present on residues Ser279 and Ser303. Residue Lys313 forms a Glycyl lysine isopeptide (Lys-Gly) (interchain with G-Cter in SUMO2) linkage. The residue at position 331 (Lys331) is an N6-acetyllysine; alternate. A Glycyl lysine isopeptide (Lys-Gly) (interchain with G-Cter in SUMO2); alternate cross-link involves residue Lys331. Phosphoserine occurs at positions 376 and 394. The tail stretch occupies residues 388–588 (RLKLSPSPSS…RASNKSCAIM (201 aa)). Positions 391–410 (LSPSPSSRVTVSRASSSRSV) are enriched in low complexity. Positions 391-433 (LSPSPSSRVTVSRASSSRSVRTTRGKRKRVDVEESEASSSVSI) are disordered. An O-linked (GlcNAc) threonine glycan is attached at Thr400. Position 414 is an omega-N-methylarginine (Arg414). A Nuclear localization signal motif is present at residues 416–421 (KRKRVD). The 117-residue stretch at 431–547 (VSISHSASAT…EEVAQRSTVF (117 aa)) folds into the LTD domain. Lys484 carries the N6-acetyllysine modification. Residue Lys533 forms a Glycyl lysine isopeptide (Lys-Gly) (interchain with G-Cter in SUMO2) linkage. Ser535 is subject to Phosphoserine. Lys548 is covalently cross-linked (Glycyl lysine isopeptide (Lys-Gly) (interchain with G-Cter in SUMO2)). Cys585 carries the cysteine methyl ester modification. Cys585 is lipidated: S-farnesyl cysteine. The propeptide at 586 to 588 (AIM) is removed in mature form.

It belongs to the intermediate filament family. As to quaternary structure, homodimer. Lamin dimers then assemble into dimeric head-to-tail polymers. Ultimately, two head-to-tail polymers assemble laterally into a protofilament with a uniformly shaped rod of 3.5 nm in diameter. Interacts with SPAG4 and SEPT12. B-type lamins undergo a series of modifications, such as farnesylation and phosphorylation. Increased phosphorylation of the lamins occurs before envelope disintegration and probably plays a role in regulating lamin associations. In terms of processing, phosphorylation plays a key role in lamin organization, subcellular localization and nuclear envelope disintegration. Phosphorylation by CDK1 at Ser-24 and Ser-394 at the onset of mitosis drives lamin disassembly and nuclear envelope breakdown.

It is found in the nucleus lamina. Its function is as follows. Lamins are intermediate filament proteins that assemble into a filamentous meshwork, and which constitute the major components of the nuclear lamina, a fibrous layer on the nucleoplasmic side of the inner nuclear membrane. Lamins provide a framework for the nuclear envelope, bridging the nuclear envelope and chromatin, thereby playing an important role in nuclear assembly, chromatin organization, nuclear membrane and telomere dynamics. The structural integrity of the lamina is strictly controlled by the cell cycle, as seen by the disintegration and formation of the nuclear envelope in prophase and telophase, respectively. In Mus musculus (Mouse), this protein is Lamin-B1 (Lmnb1).